Consider the following 1641-residue polypeptide: Histone-lysine N-methyltransferase SETD1 (1641 aa).

Residues 1–23 form a disordered region; sequence MQDVRNINLVNNSSNSHDSSLAN. The segment covering 8 to 23 has biased composition (low complexity); sequence NLVNNSSNSHDSSLAN. The 79-residue stretch at 101-179 folds into the RRM domain; that stretch reads VEVTIVNLND…KILDVFCDPF (79 aa). Disordered regions lie at residues 236 to 384, 537 to 596, 831 to 915, 930 to 949, 1119 to 1155, and 1205 to 1226; these read YTTQ…IDQR, APPF…SDEE, RIRK…SSSS, KART…NLNQ, QEKR…RKTA, and NSKG…SSQA. Over residues 244–284 the composition is skewed to basic and acidic residues; it reads IPNRSRDRNWNRDKERERDRHFKERSRHSSERSYDRDRGMR. Residues 291–300 show a composition bias toward basic residues; that stretch reads IRRRRTFYRR. Basic and acidic residues-rich tracts occupy residues 308–341 and 349–384; these read EDSR…ESFR and KGRD…IDQR. Low complexity predominate over residues 556 to 568; it reads EVFSDVNSDSNNS. Composition is skewed to basic and acidic residues over residues 569–579 and 844–867; these read ENKKRSCEKNN and NFLE…KEDS. The segment covering 904–915 has biased composition (low complexity); that stretch reads SASSFFSSSSSS. Composition is skewed to basic and acidic residues over residues 930–939 and 1119–1128; these read KARTSEEDSP and QEKRIEKSLD. Residues 1091-1132 are a coiled coil; the sequence is SEEEKEYQERRKRNTEYMAQMEREFLEEQEKRIEKSLDKNLQ. 2 stretches are compositionally biased toward polar residues: residues 1129 to 1145 and 1205 to 1217; these read KNLQ…NSPR and NSKG…QSPV. The RxxxRR motif signature appears at 1473-1478; it reads RSNQRR. In terms of domain architecture, SET spans 1502–1619; the sequence is KQLKFAKSAI…INEEITYDYK (118 aa). Position 1618 (Tyr-1618) interacts with S-adenosyl-L-methionine. The 17-residue stretch at 1625-1641 folds into the Post-SET domain; that stretch reads EKIPCLCGAQGCRGTLN.

This sequence belongs to the class V-like SAM-binding methyltransferase superfamily. As to quaternary structure, component of the Set1C/COMPASS complex, composed at least of the catalytic subunit Set1, wds/WDR5, Wdr82, Rbbp5, ash2, Cfp1/CXXC1, hcf and Dpy-30L1.

It localises to the nucleus. Its subcellular location is the chromosome. The catalysed reaction is L-lysyl(4)-[histone H3] + 3 S-adenosyl-L-methionine = N(6),N(6),N(6)-trimethyl-L-lysyl(4)-[histone H3] + 3 S-adenosyl-L-homocysteine + 3 H(+). The enzyme catalyses N(6)-methyl-L-lysyl(4)-[histone H3] + S-adenosyl-L-methionine = N(6),N(6)-dimethyl-L-lysyl(4)-[histone H3] + S-adenosyl-L-homocysteine + H(+). It catalyses the reaction N(6),N(6)-dimethyl-L-lysyl(4)-[histone H3] + S-adenosyl-L-methionine = N(6),N(6),N(6)-trimethyl-L-lysyl(4)-[histone H3] + S-adenosyl-L-homocysteine + H(+). Functionally, catalytic component of the COMPASS (Set1C) complex that specifically mono-, di- and trimethylates histone H3 to form H3K4me1/2/3. Binds RNAs which might negatively affect its histone methyltransferase activity. COMPASS recognizes ubiquitinated H2B on one face of the nucleosome which stimulates the methylation of H3 on the opposing face. Set1-dependent trimethylation regulates chromatin changes at active promoters that ensure optimal RNA polymerase II release into productive elongation, thereby contributing to optimal transcription. The sequence is that of Histone-lysine N-methyltransferase SETD1 from Drosophila melanogaster (Fruit fly).